A 205-amino-acid polypeptide reads, in one-letter code: Endoribonuclease YbeY (205 aa).

Zn(2+) contacts are provided by His-124, His-128, and His-134. The segment at 162-205 (GTAPVAPGGEAQVPNEALETSGKRQDHSLGEILPGGMSRRLAGS) is disordered.

Belongs to the endoribonuclease YbeY family. Requires Zn(2+) as cofactor.

The protein localises to the cytoplasm. Functionally, single strand-specific metallo-endoribonuclease involved in late-stage 70S ribosome quality control and in maturation of the 3' terminus of the 16S rRNA. In Beijerinckia indica subsp. indica (strain ATCC 9039 / DSM 1715 / NCIMB 8712), this protein is Endoribonuclease YbeY.